The chain runs to 1259 residues: Cingulin (1259 aa).

The tract at residues 9–324 is head; that stretch reads MADQPIPVGQ…EKFPSLQAQP (316 aa). Positions 41-55 match the ZIM motif; the sequence is QDSYGVAVRVQGIDG. Positions 69 to 79 are enriched in basic and acidic residues; sequence SSYDYDRHYSE. Disordered regions lie at residues 69–151, 169–232, 317–338, 941–969, and 1192–1259; these read SSYD…IDTK, VRGR…RQSL, FPSL…KKEL, KSRR…NSSR, and REME…TSSC. Residues 80–100 are compositionally biased toward polar residues; sequence RSSTLDTAYSQSSRESAWSRG. A compositionally biased stretch (low complexity) spans 117 to 127; that stretch reads SATSQQSTSAS. Residues 128-145 are compositionally biased toward polar residues; the sequence is NKTNKNGLSTSSFSNQSS. Residues 179–204 show a composition bias toward basic and acidic residues; the sequence is ALKDERKRSQSLDGRKNYQDTADSRE. The span at 220–229 shows a compositional bias: polar residues; that stretch reads VSSANRSFAR. Residues 325–1218 adopt a coiled-coil conformation; that stretch reads GEDTRSLGSQ…KTMEKESKRK (894 aa). A compositionally biased stretch (basic and acidic residues) spans 326–338; that stretch reads EDTRSLGSQKKEL. A tail region spans residues 1220 to 1259; that stretch reads IRPAHNDDDDLSSDGEYGGSYDPSSITSLLTESNLQTSSC. A compositionally biased stretch (polar residues) spans 1241 to 1259; it reads DPSSITSLLTESNLQTSSC.

The protein belongs to the cingulin family. As to quaternary structure, parallel homodimer. Interacts with TJP1/ZO1 and TJP2/ZO2.

It is found in the cell junction. It localises to the tight junction. Its function is as follows. Probably plays a role in the formation and regulation of the tight junction (TJ) paracellular permeability barrier, possibly by linking ZO proteins to the actomyosin cytoskeleton. The sequence is that of Cingulin from Xenopus tropicalis (Western clawed frog).